A 159-amino-acid polypeptide reads, in one-letter code: Afifavidin (159 aa).

The first 23 residues, 1-23, serve as a signal peptide directing secretion; that stretch reads MRRLASLAVALPLLAVVASPALA. One can recognise an Avidin-like domain in the interval 36–151; the sequence is GVPAVSSSWV…GSDTFTLVNK (116 aa). Biotin is bound by residues N46, S50, Y66, N68, and G74. C75 and C104 are disulfide-bonded. Biotin is bound by residues S106, T108, and D144.

Belongs to the avidin/streptavidin family. Exhibits a dynamic oligomeric assembly: the apo form self-assembles mostly into toroid-shaped homooctamers, with a small fraction of homodimers, yet upon biotin binding the intact afifavidin consists solely of the dimer.

Its subcellular location is the secreted. In terms of biological role, the exact role played by afifavidin is still obscure. Forms a strong non-covalent complex with biotin and 2-iminobiotin. This Afifella pfennigii (Rhodobium pfennigii) protein is Afifavidin.